The primary structure comprises 358 residues: Peptide chain release factor 1 (358 aa).

Glutamine 233 bears the N5-methylglutamine mark.

Belongs to the prokaryotic/mitochondrial release factor family. In terms of processing, methylated by PrmC. Methylation increases the termination efficiency of RF1.

Its subcellular location is the cytoplasm. Its function is as follows. Peptide chain release factor 1 directs the termination of translation in response to the peptide chain termination codons UAG and UAA. This is Peptide chain release factor 1 from Clostridium botulinum (strain ATCC 19397 / Type A).